The primary structure comprises 445 residues: Probable D-serine dehydratase (445 aa).

Lysine 111 bears the N6-(pyridoxal phosphate)lysine mark.

This sequence belongs to the serine/threonine dehydratase family. DsdA subfamily. Pyridoxal 5'-phosphate serves as cofactor.

The enzyme catalyses D-serine = pyruvate + NH4(+). The sequence is that of Probable D-serine dehydratase from Burkholderia pseudomallei (strain K96243).